Here is an 81-residue protein sequence, read N- to C-terminus: Antimicrobial peptide D1 (81 aa).

The N-terminal stretch at 1–31 (MAKTVLGIHVTFLTLLFAVLLLNDVMYTPVE) is a signal peptide. Cystine bridges form between cysteine 34–cysteine 81, cysteine 45–cysteine 66, cysteine 51–cysteine 75, and cysteine 55–cysteine 77.

In terms of biological role, antimicrobial peptide probably active against fungi like B.sorokiniana, F.oxysporum, F.graminearum, F.avenaceum, B.cinerea, P.beta, P.infestans and P.debaryanum. This is Antimicrobial peptide D1 from Stellaria media (Common chickweed).